Consider the following 432-residue polypeptide: 3-phosphoshikimate 1-carboxyvinyltransferase (432 aa).

Residues Lys21, Ser22, and Arg26 each coordinate 3-phosphoshikimate. Lys21 lines the phosphoenolpyruvate pocket. The phosphoenolpyruvate site is built by Gly94 and Arg122. 3-phosphoshikimate is bound by residues Ser168, Gln170, Asp317, and Lys344. Residue Gln170 participates in phosphoenolpyruvate binding. The Proton acceptor role is filled by Asp317. Phosphoenolpyruvate contacts are provided by Arg348 and Arg391.

This sequence belongs to the EPSP synthase family. As to quaternary structure, monomer.

It localises to the cytoplasm. It carries out the reaction 3-phosphoshikimate + phosphoenolpyruvate = 5-O-(1-carboxyvinyl)-3-phosphoshikimate + phosphate. It participates in metabolic intermediate biosynthesis; chorismate biosynthesis; chorismate from D-erythrose 4-phosphate and phosphoenolpyruvate: step 6/7. Catalyzes the transfer of the enolpyruvyl moiety of phosphoenolpyruvate (PEP) to the 5-hydroxyl of shikimate-3-phosphate (S3P) to produce enolpyruvyl shikimate-3-phosphate and inorganic phosphate. The chain is 3-phosphoshikimate 1-carboxyvinyltransferase from Petrotoga mobilis (strain DSM 10674 / SJ95).